Reading from the N-terminus, the 200-residue chain is Dual specificity tyrosine-phosphorylation-regulated kinase 1A (200 aa).

Tyr41 is subject to Phosphotyrosine; by autocatalysis. An ATP-binding site is contributed by Lys58. The residue at position 76 (Tyr76) is a Phosphotyrosine; by autocatalysis. Ser88 bears the Phosphoserine; by autocatalysis mark. The residue at position 122 (Thr122) is a Phosphothreonine; by autocatalysis.

The protein belongs to the protein kinase superfamily. CMGC Ser/Thr protein kinase family. MNB/DYRK subfamily. As to quaternary structure, interacts with RAD54L2/ARIP4. Interacts with CRY2. Interacts with RANBP9. Interacts with WDR68. Interacts with SIRT1. In terms of processing, can also autophosphorylate on serine and threonine residues (in vitro). Autophosphorylated on numerous tyrosine residues.

It localises to the nucleus. It catalyses the reaction L-tyrosyl-[protein] + ATP = O-phospho-L-tyrosyl-[protein] + ADP + H(+). It carries out the reaction L-seryl-[protein] + ATP = O-phospho-L-seryl-[protein] + ADP + H(+). The catalysed reaction is L-threonyl-[protein] + ATP = O-phospho-L-threonyl-[protein] + ADP + H(+). The enzyme catalyses [DNA-directed RNA polymerase] + ATP = phospho-[DNA-directed RNA polymerase] + ADP + H(+). Its activity is regulated as follows. Inhibited by RANBP9. Its function is as follows. Dual-specificity kinase which possesses both serine/threonine and tyrosine kinase activities. Exhibits a substrate preference for proline at position P+1 and arginine at position P-3. Plays an important role in double-strand breaks (DSBs) repair following DNA damage. Mechanistically, phosphorylates RNF169 and increases its ability to block accumulation of TP53BP1 at the DSB sites thereby promoting homologous recombination repair (HRR). Also acts as a positive regulator of transcription by acting as a CTD kinase that mediates phosphorylation of the CTD (C-terminal domain) of the large subunit of RNA polymerase II (RNAP II) POLR2A. May play a role in a signaling pathway regulating nuclear functions of cell proliferation. Modulates alternative splicing by phosphorylating the splice factor SRSF6. Has pro-survival function and negatively regulates the apoptotic process. Promotes cell survival upon genotoxic stress through phosphorylation of SIRT1. This in turn inhibits p53/TP53 activity and apoptosis. Phosphorylates SEPTIN4, SEPTIN5 and SF3B1 at 'Thr-434'. The sequence is that of Dual specificity tyrosine-phosphorylation-regulated kinase 1A from Oryctolagus cuniculus (Rabbit).